An 809-amino-acid polypeptide reads, in one-letter code: PiggyBac transposable element-derived protein 1 (809 aa).

The region spanning 44 to 126 is the SCAN box domain; it reads RLRFRHFCYQ…TVLENLETGS (83 aa). The tract at residues 170–199 is disordered; it reads CEPPQRPQGNPQEVSGPVPHGSAHLQEKNP. Lysine 218 is covalently cross-linked (Glycyl lysine isopeptide (Lys-Gly) (interchain with G-Cter in SUMO2)). A disordered region spans residues 271 to 297; the sequence is KQETSEEMEQSGEASGKPNRECAPQIP. Serine 360 is subject to Phosphoserine.

This chain is PiggyBac transposable element-derived protein 1 (PGBD1), found in Homo sapiens (Human).